Reading from the N-terminus, the 344-residue chain is Methylthioribose-1-phosphate isomerase (344 aa).

Substrate is bound by residues 55 to 57 (RGA), R98, and Q202. D243 acts as the Proton donor in catalysis. 253–254 (NK) is a substrate binding site.

It belongs to the eIF-2B alpha/beta/delta subunits family. MtnA subfamily.

It carries out the reaction 5-(methylsulfanyl)-alpha-D-ribose 1-phosphate = 5-(methylsulfanyl)-D-ribulose 1-phosphate. It functions in the pathway amino-acid biosynthesis; L-methionine biosynthesis via salvage pathway; L-methionine from S-methyl-5-thio-alpha-D-ribose 1-phosphate: step 1/6. Its function is as follows. Catalyzes the interconversion of methylthioribose-1-phosphate (MTR-1-P) into methylthioribulose-1-phosphate (MTRu-1-P). This is Methylthioribose-1-phosphate isomerase from Gemmatimonas aurantiaca (strain DSM 14586 / JCM 11422 / NBRC 100505 / T-27).